We begin with the raw amino-acid sequence, 208 residues long: Uracil phosphoribosyltransferase (208 aa).

Residues R78, R103, and 130–138 (DPMLATGGS) contribute to the 5-phospho-alpha-D-ribose 1-diphosphate site. Uracil contacts are provided by residues I193 and 198–200 (GDA). Residue D199 participates in 5-phospho-alpha-D-ribose 1-diphosphate binding.

This sequence belongs to the UPRTase family. Mg(2+) serves as cofactor.

The enzyme catalyses UMP + diphosphate = 5-phospho-alpha-D-ribose 1-diphosphate + uracil. It participates in pyrimidine metabolism; UMP biosynthesis via salvage pathway; UMP from uracil: step 1/1. Its activity is regulated as follows. Allosterically activated by GTP. Its function is as follows. Catalyzes the conversion of uracil and 5-phospho-alpha-D-ribose 1-diphosphate (PRPP) to UMP and diphosphate. The polypeptide is Uracil phosphoribosyltransferase (Neisseria gonorrhoeae (strain ATCC 700825 / FA 1090)).